Reading from the N-terminus, the 152-residue chain is Proline-rich acidic protein 1 (152 aa).

Positions 1–20 (MKRFLLATCLVAVLLWEAGA) are cleaved as a signal peptide.

Interacts with MTTP. Interacts with MAD1L1. Highly expressed in the small intestine where it shows a proximal-distal graded expression.

Its subcellular location is the secreted. The protein resides in the endoplasmic reticulum. In terms of biological role, lipid-binding protein which promotes lipid absorption by facilitating MTTP-mediated lipid transfer (mainly triglycerides and phospholipids) and MTTP-mediated apoB lipoprotein assembly and secretion. Protects the gastrointestinal epithelium from irradiation-induced apoptosis. May play an important role in maintaining normal growth homeostasis in epithelial cells. Involved in p53/TP53-dependent cell survival after DNA damage. The protein is Proline-rich acidic protein 1 (Prap1) of Rattus norvegicus (Rat).